We begin with the raw amino-acid sequence, 261 residues long: 3-deoxy-manno-octulosonate cytidylyltransferase 1 (261 aa).

This sequence belongs to the KdsB family.

It localises to the cytoplasm. The enzyme catalyses 3-deoxy-alpha-D-manno-oct-2-ulosonate + CTP = CMP-3-deoxy-beta-D-manno-octulosonate + diphosphate. It functions in the pathway nucleotide-sugar biosynthesis; CMP-3-deoxy-D-manno-octulosonate biosynthesis; CMP-3-deoxy-D-manno-octulosonate from 3-deoxy-D-manno-octulosonate and CTP: step 1/1. The protein operates within bacterial outer membrane biogenesis; lipopolysaccharide biosynthesis. Functionally, activates KDO (a required 8-carbon sugar) for incorporation into bacterial lipopolysaccharide in Gram-negative bacteria. In Burkholderia lata (strain ATCC 17760 / DSM 23089 / LMG 22485 / NCIMB 9086 / R18194 / 383), this protein is 3-deoxy-manno-octulosonate cytidylyltransferase 1.